A 309-amino-acid polypeptide reads, in one-letter code: Dihydroorotate dehydrogenase B (NAD(+)), catalytic subunit (309 aa).

FMN-binding positions include Ser21 and 45-46 (KA). Residues Lys45 and 69–73 (NAIGL) each bind substrate. Residues Asn99 and Asn127 each coordinate FMN. Asn127 is a binding site for substrate. Catalysis depends on Cys130, which acts as the Nucleophile. The FMN site is built by Lys165 and Ile191. A substrate-binding site is contributed by 192–193 (NT). Residues Gly217, 243–244 (GG), and 265–266 (GT) contribute to the FMN site.

Belongs to the dihydroorotate dehydrogenase family. Type 1 subfamily. Heterotetramer of 2 PyrK and 2 PyrD type B subunits. It depends on FMN as a cofactor.

The protein resides in the cytoplasm. The enzyme catalyses (S)-dihydroorotate + NAD(+) = orotate + NADH + H(+). Its pathway is pyrimidine metabolism; UMP biosynthesis via de novo pathway; orotate from (S)-dihydroorotate (NAD(+) route): step 1/1. Its function is as follows. Catalyzes the conversion of dihydroorotate to orotate with NAD(+) as electron acceptor. The chain is Dihydroorotate dehydrogenase B (NAD(+)), catalytic subunit (pyrD) from Exiguobacterium sibiricum (strain DSM 17290 / CCUG 55495 / CIP 109462 / JCM 13490 / 255-15).